The following is an 883-amino-acid chain: Phosphoenolpyruvate carboxylase (883 aa).

Residues His138 and Lys546 contribute to the active site.

This sequence belongs to the PEPCase type 1 family. Mg(2+) is required as a cofactor.

The catalysed reaction is oxaloacetate + phosphate = phosphoenolpyruvate + hydrogencarbonate. Functionally, forms oxaloacetate, a four-carbon dicarboxylic acid source for the tricarboxylic acid cycle. The chain is Phosphoenolpyruvate carboxylase from Escherichia fergusonii (strain ATCC 35469 / DSM 13698 / CCUG 18766 / IAM 14443 / JCM 21226 / LMG 7866 / NBRC 102419 / NCTC 12128 / CDC 0568-73).